We begin with the raw amino-acid sequence, 401 residues long: Imidazolonepropionase (401 aa).

Fe(3+) is bound by residues His-66 and His-68. Residues His-66 and His-68 each contribute to the Zn(2+) site. 4-imidazolone-5-propanoate is bound by residues Arg-75, Tyr-138, and His-171. An N-formimidoyl-L-glutamate-binding site is contributed by Tyr-138. A Fe(3+)-binding site is contributed by His-236. His-236 contributes to the Zn(2+) binding site. Gln-239 contributes to the 4-imidazolone-5-propanoate binding site. Residue Asp-311 coordinates Fe(3+). Asp-311 serves as a coordination point for Zn(2+). N-formimidoyl-L-glutamate-binding residues include Asn-313 and Gly-315. Thr-316 is a binding site for 4-imidazolone-5-propanoate.

Belongs to the metallo-dependent hydrolases superfamily. HutI family. Zn(2+) is required as a cofactor. Fe(3+) serves as cofactor.

It is found in the cytoplasm. The catalysed reaction is 4-imidazolone-5-propanoate + H2O = N-formimidoyl-L-glutamate. The protein operates within amino-acid degradation; L-histidine degradation into L-glutamate; N-formimidoyl-L-glutamate from L-histidine: step 3/3. Catalyzes the hydrolytic cleavage of the carbon-nitrogen bond in imidazolone-5-propanoate to yield N-formimidoyl-L-glutamate. It is the third step in the universal histidine degradation pathway. This is Imidazolonepropionase from Acinetobacter baumannii (strain AB0057).